Here is a 611-residue protein sequence, read N- to C-terminus: Putative pentatricopeptide repeat-containing protein At1g56570 (611 aa).

13 PPR repeats span residues 44 to 74, 75 to 109, 110 to 144, 145 to 176, 177 to 211, 212 to 246, 247 to 281, 282 to 311, 312 to 346, 347 to 377, 379 to 413, 414 to 444, and 450 to 480; these read HHIL…MPDR, DVVA…GTSP, NEFT…GMEG, SLYV…IKVK, NDVT…NAEV, TPYC…GFQS, NLPV…DLIT, WNTL…GFVP, NCYT…GFNK, NVEL…IVDR, NLVS…GIRP, DRIV…MESE, and DRDI…MPFK. The segment at 485–561 is type E motif; that stretch reads TWGAILGACK…EAGMSWILVE (77 aa). Residues 562–592 form a type E(+) motif region; the sequence is NQVFSFAVSDKMCPNASSVYSVLGLLIEETR.

The protein belongs to the PPR family. PCMP-E subfamily.

The protein is Putative pentatricopeptide repeat-containing protein At1g56570 (PCMP-E64) of Arabidopsis thaliana (Mouse-ear cress).